Here is a 143-residue protein sequence, read N- to C-terminus: Hemoglobin subunit alpha-1 (143 aa).

Serine 2 is modified (N-acetylserine). Positions 2-143 (SLSSKDKATV…RALALAEKYR (142 aa)) constitute a Globin domain. Histidine 60 lines the O2 pocket. Heme b is bound at residue histidine 89.

Belongs to the globin family. As to quaternary structure, hb 1 is a heterotetramer of two alpha-1 and two beta-1 chains. Hb 3 is a heterotetramer of two alpha-1 and two beta-2 chains. As to expression, red blood cells.

Its function is as follows. Involved in oxygen transport from gills to the various peripheral tissues. In Gadus morhua (Atlantic cod), this protein is Hemoglobin subunit alpha-1 (hba1).